A 391-amino-acid polypeptide reads, in one-letter code: Multidrug resistance protein MdtL (391 aa).

Over 1-3 (MSR) the chain is Cytoplasmic. The chain crosses the membrane as a helical span at residues 4–24 (FLICSFALVLLYPAGIDMYLV). Topologically, residues 25-41 (GLPRIAADLNASEAQLH) are periplasmic. A helical membrane pass occupies residues 42–62 (IAFSVYLAGMAAAMLFAGKVA). Topologically, residues 63-68 (DRSGRK) are cytoplasmic. A helical transmembrane segment spans residues 69-89 (PVAIPGAALFIITSVFCSLAE). Topologically, residues 90 to 92 (TST) are periplasmic. The helical transmembrane segment at 93–113 (LFLAGRFLQGLGAGCCYVVAF) threads the bilayer. Residues 114-130 (AILRDTLDDRRRAKVLS) are Cytoplasmic-facing. A helical membrane pass occupies residues 131 to 151 (LLNGITCIIPVLAPVLGHLIM). The Periplasmic portion of the chain corresponds to 152-157 (LKFPWQ). The helical transmembrane segment at 158 to 178 (SLFWTMAIMGIAVLMLSLFIL) threads the bilayer. Over 179–198 (KETRPAAPAASDKSRENSES) the chain is Cytoplasmic. Residues 199 to 221 (LLNRFFLSRVVITTLSVSVILTF) form a helical membrane-spanning segment. Residues 222–244 (VNTSPVLLMEIMGFERGEYATIM) lie on the Periplasmic side of the membrane. The chain crosses the membrane as a helical span at residues 245–265 (ALTAGVSMTVSFSTPFALGIF). Over 266–268 (KPR) the chain is Cytoplasmic. A helical membrane pass occupies residues 269–289 (TLMITSQVLFLAAGITLTVSP). Residues 290–292 (SHA) are Periplasmic-facing. The helical transmembrane segment at 293-313 (VSLFGITLICAGFSVGFGVAM) threads the bilayer. The Cytoplasmic portion of the chain corresponds to 314-330 (SQALGPFSLRAGVASST). Residues 331–351 (LGIAQVCGSSLWIWLAAVVGI) form a helical membrane-spanning segment. At 352-355 (SAWN) the chain is on the periplasmic side. A helical transmembrane segment spans residues 356–376 (MLIGILIACSIVSLLLIMFVA). Residues 377-391 (PGRPVTAHEEIHHHA) lie on the Cytoplasmic side of the membrane.

The protein belongs to the major facilitator superfamily. DHA1 family. MdtL (TC 2.A.1.2.22) subfamily.

It localises to the cell inner membrane. In terms of biological role, confers resistance to chloramphenicol. This is Multidrug resistance protein MdtL (mdtL) from Escherichia coli O157:H7.